Reading from the N-terminus, the 132-residue chain is Arginine decarboxylase proenzyme (132 aa).

S70 serves as the catalytic Schiff-base intermediate with substrate; via pyruvic acid. The residue at position 70 (S70) is a Pyruvic acid (Ser); by autocatalysis. The active-site Proton acceptor; for processing activity is H75. C90 (proton donor; for catalytic activity) is an active-site residue.

Belongs to the prokaryotic AdoMetDC family. Type 1 subfamily. In terms of assembly, heterooctamer of four alpha and four beta chains arranged as a tetramer of alpha/beta heterodimers. Requires pyruvate as cofactor. In terms of processing, is synthesized initially as an inactive proenzyme. Formation of the active enzyme involves a self-maturation process in which the active site pyruvoyl group is generated from an internal serine residue via an autocatalytic post-translational modification. Two non-identical subunits are generated from the proenzyme in this reaction, and the pyruvate is formed at the N-terminus of the alpha chain, which is derived from the carboxyl end of the proenzyme. The post-translation cleavage follows an unusual pathway, termed non-hydrolytic serinolysis, in which the side chain hydroxyl group of the serine supplies its oxygen atom to form the C-terminus of the beta chain, while the remainder of the serine residue undergoes an oxidative deamination to produce ammonia and the pyruvoyl group blocking the N-terminus of the alpha chain.

The catalysed reaction is L-arginine + H(+) = agmatine + CO2. It participates in amine and polyamine biosynthesis; agmatine biosynthesis; agmatine from L-arginine: step 1/1. Its function is as follows. Specifically catalyzes the decarboxylation of L-arginine to agmatine. Has no S-adenosylmethionine decarboxylase (AdoMetDC) activity. In Aeropyrum pernix (strain ATCC 700893 / DSM 11879 / JCM 9820 / NBRC 100138 / K1), this protein is Arginine decarboxylase proenzyme.